A 229-amino-acid polypeptide reads, in one-letter code: Cytochrome c oxidase subunit 2 (229 aa).

The Mitochondrial intermembrane portion of the chain corresponds to 1–26 (MATWAQFGLQDASSPLMEELTYFHDY). The chain crosses the membrane as a helical span at residues 27-48 (ALIVLTLITILVFYGLVSLLLS). The Mitochondrial matrix portion of the chain corresponds to 49–62 (SSTNRFFLEGQELE). The chain crosses the membrane as a helical span at residues 63–82 (TIWTVVPAFILIFIALPSLQ). At 83-229 (LLYLMDEVNN…ENWVAQYIEE (147 aa)) the chain is on the mitochondrial intermembrane side. Residues histidine 161, cysteine 196, glutamate 198, cysteine 200, histidine 204, and methionine 207 each contribute to the Cu cation site. Residue glutamate 198 coordinates Mg(2+).

This sequence belongs to the cytochrome c oxidase subunit 2 family. Component of the cytochrome c oxidase (complex IV, CIV), a multisubunit enzyme composed of a catalytic core of 3 subunits and several supernumerary subunits. The complex exists as a monomer or a dimer and forms supercomplexes (SCs) in the inner mitochondrial membrane with ubiquinol-cytochrome c oxidoreductase (cytochrome b-c1 complex, complex III, CIII). It depends on Cu cation as a cofactor.

It localises to the mitochondrion inner membrane. The catalysed reaction is 4 Fe(II)-[cytochrome c] + O2 + 8 H(+)(in) = 4 Fe(III)-[cytochrome c] + 2 H2O + 4 H(+)(out). Component of the cytochrome c oxidase, the last enzyme in the mitochondrial electron transport chain which drives oxidative phosphorylation. The respiratory chain contains 3 multisubunit complexes succinate dehydrogenase (complex II, CII), ubiquinol-cytochrome c oxidoreductase (cytochrome b-c1 complex, complex III, CIII) and cytochrome c oxidase (complex IV, CIV), that cooperate to transfer electrons derived from NADH and succinate to molecular oxygen, creating an electrochemical gradient over the inner membrane that drives transmembrane transport and the ATP synthase. Cytochrome c oxidase is the component of the respiratory chain that catalyzes the reduction of oxygen to water. Electrons originating from reduced cytochrome c in the intermembrane space (IMS) are transferred via the dinuclear copper A center (CU(A)) of subunit 2 and heme A of subunit 1 to the active site in subunit 1, a binuclear center (BNC) formed by heme A3 and copper B (CU(B)). The BNC reduces molecular oxygen to 2 water molecules using 4 electrons from cytochrome c in the IMS and 4 protons from the mitochondrial matrix. This chain is Cytochrome c oxidase subunit 2 (COII), found in Paracentrotus lividus (Common sea urchin).